The sequence spans 525 residues: D-arabinono-1,4-lactone oxidase (525 aa).

The FAD-binding PCMH-type domain maps to 23-197 (YSCRPQLYFQ…VKATIRVIPE (175 aa)). Residue histidine 60 is modified to Pros-8alpha-FAD histidine.

Belongs to the oxygen-dependent FAD-linked oxidoreductase family. Requires FAD as cofactor.

It is found in the mitochondrion membrane. The enzyme catalyses D-arabinono-1,4-lactone + O2 = dehydro-D-arabinono-1,4-lactone + H2O2 + H(+). Its pathway is cofactor biosynthesis; D-erythroascorbate biosynthesis; dehydro-D-arabinono-1,4-lactone from D-arabinose: step 2/2. In Kluyveromyces lactis (strain ATCC 8585 / CBS 2359 / DSM 70799 / NBRC 1267 / NRRL Y-1140 / WM37) (Yeast), this protein is D-arabinono-1,4-lactone oxidase (ALO1).